A 100-amino-acid chain; its full sequence is Co-chaperonin GroES (100 aa).

The protein belongs to the GroES chaperonin family. Heptamer of 7 subunits arranged in a ring. Interacts with the chaperonin GroEL.

The protein resides in the cytoplasm. Together with the chaperonin GroEL, plays an essential role in assisting protein folding. The GroEL-GroES system forms a nano-cage that allows encapsulation of the non-native substrate proteins and provides a physical environment optimized to promote and accelerate protein folding. GroES binds to the apical surface of the GroEL ring, thereby capping the opening of the GroEL channel. The protein is Co-chaperonin GroES of Rhodothermus marinus (Rhodothermus obamensis).